The sequence spans 449 residues: Kynurenine 3-monooxygenase (449 aa).

This sequence belongs to the aromatic-ring hydroxylase family. KMO subfamily. FAD serves as cofactor.

The enzyme catalyses L-kynurenine + NADPH + O2 + H(+) = 3-hydroxy-L-kynurenine + NADP(+) + H2O. Its pathway is cofactor biosynthesis; NAD(+) biosynthesis; quinolinate from L-kynurenine: step 1/3. Its function is as follows. Catalyzes the hydroxylation of L-kynurenine (L-Kyn) to form 3-hydroxy-L-kynurenine (L-3OHKyn). Required for synthesis of quinolinic acid. The protein is Kynurenine 3-monooxygenase of Legionella pneumophila (strain Corby).